Reading from the N-terminus, the 356-residue chain is Tyrosine recombinase XerS (356 aa).

The Core-binding (CB) domain occupies 16-121 (TMPWYILEYY…ALSSLYKYLT (106 aa)). In terms of domain architecture, Tyr recombinase spans 169-354 (EFLQYIDREY…VNDEQKNALN (186 aa)). Catalysis depends on residues R210, K234, H306, R309, and H332. Y341 serves as the catalytic O-(3'-phospho-DNA)-tyrosine intermediate.

It belongs to the 'phage' integrase family. XerS subfamily.

It localises to the cytoplasm. With respect to regulation, ftsK is required for recombination. Functionally, site-specific tyrosine recombinase, which acts by catalyzing the cutting and rejoining of the recombining DNA molecules. Essential to convert dimers of the bacterial chromosome into monomers to permit their segregation at cell division. This chain is Tyrosine recombinase XerS, found in Streptococcus gordonii (strain Challis / ATCC 35105 / BCRC 15272 / CH1 / DL1 / V288).